Consider the following 133-residue polypeptide: FPRL1 inhibitory protein (133 aa).

Positions 1-28 (MKKNITKTIIASTVIAAGLLTQTNDAKA) are cleaved as a signal peptide.

This sequence belongs to the CHIPS/FLIPr family.

Its subcellular location is the secreted. In terms of biological role, may be involved in countering the first line of host defense mechanisms. Impairs the leukocyte response to FPRL1 agonists by binding directly to host FPRL1. The sequence is that of FPRL1 inhibitory protein (flr) from Staphylococcus aureus (strain Mu50 / ATCC 700699).